The primary structure comprises 256 residues: MLFLLSPAKKLDYDTPVHVEHHTQPLFVEQSAALIKVLKTLSADDVAALMSLSPALAELNVARYAAWSRKFTQHNARQAVLAFNGDVYEGLQAGSLSPARLDWAQEHVAILSGLYGVLRPLDLMQPYRLEMGTRLATPKGKNLYEFWGSTIADYLNERLAGQKTPIVVNLASEEYFKSVDLKVLKARVVQCVFQDWKNGAWKVISFHAKRARGLMARYAIEHKVAKPEGLQKFDSEGYAFDASASSADKLVFRRKA.

This sequence belongs to the UPF0246 family.

This Bordetella petrii (strain ATCC BAA-461 / DSM 12804 / CCUG 43448) protein is UPF0246 protein Bpet1601.